Here is a 91-residue protein sequence, read N- to C-terminus: Small ribosomal subunit protein uS15 (91 aa).

The protein belongs to the universal ribosomal protein uS15 family. In terms of assembly, part of the 30S ribosomal subunit. Forms a bridge to the 50S subunit in the 70S ribosome, contacting the 23S rRNA.

Functionally, one of the primary rRNA binding proteins, it binds directly to 16S rRNA where it helps nucleate assembly of the platform of the 30S subunit by binding and bridging several RNA helices of the 16S rRNA. Forms an intersubunit bridge (bridge B4) with the 23S rRNA of the 50S subunit in the ribosome. The polypeptide is Small ribosomal subunit protein uS15 (Synechococcus sp. (strain JA-3-3Ab) (Cyanobacteria bacterium Yellowstone A-Prime)).